We begin with the raw amino-acid sequence, 2048 residues long: Myoferlin (2048 aa).

Residues 1-101 (MLRVIVESAT…IGDQNRSLPY (101 aa)) enclose the C2 1 domain. Over 1 to 2012 (MLRVIVESAT…MRFIVWRRFK (2012 aa)) the chain is Cytoplasmic. The interval 124 to 176 (YTPPSAPHPNDPSGTSVPGMGEEEEEDQGDEDRVDGIVRGPGPKGPSGTVSEA) is disordered. Acidic residues predominate over residues 144-156 (GEEEEEDQGDEDR). Phosphoserine is present on residues S170 and S174. C2 domains follow at residues 183-300 (TKGK…RKWL) and 339-475 (DSDD…EATT). Residues 186-281 (KSSRRMLSNK…RADCLMGEFK (96 aa)) are necessary for interaction with EHD2. Ca(2+) is bound by residues D390, D396, D444, D446, and D452. An N6-acetyllysine mark is found at K540 and K871. C2 domains are found at residues 1110–1238 (GANT…LLWH) and 1269–1397 (LPSQ…GKED). 4 residues coordinate Ca(2+): D1142, D1148, D1204, and D1206. N6-acetyllysine is present on K1494. C2 domains lie at 1523–1641 (PAPP…SHCG) and 1759–1907 (GPPG…EKCS). Ca(2+)-binding residues include D1556, D1562, D1611, D1613, D1878, S1881, and D1884. Residues 1964-1975 (EADERPAGKGRS) are compositionally biased toward basic and acidic residues. Residues 1964-1986 (EADERPAGKGRSEPNMNPKLDPP) form a disordered region. Residues 2013–2033 (WVIIGLLLLLILLLFVAVLLY) traverse the membrane as a helical segment. The Extracellular portion of the chain corresponds to 2034–2048 (SLPNYLSMKIVRPNA).

This sequence belongs to the ferlin family. As to quaternary structure, interacts with EHD1. Interacts with EHD2; the interaction is direct. Interacts with DNM2 and KDR. Interacts with RIPOR2. It depends on Ca(2+) as a cofactor. Expressed in myoblasts (at protein level). Expressed in endothelial cells.

It is found in the cell membrane. Its subcellular location is the nucleus membrane. The protein localises to the cytoplasmic vesicle membrane. Calcium/phospholipid-binding protein that plays a role in the plasmalemma repair mechanism of endothelial cells that permits rapid resealing of membranes disrupted by mechanical stress. Involved in endocytic recycling. Implicated in VEGF signal transduction by regulating the levels of the receptor KDR. This chain is Myoferlin (Myof), found in Mus musculus (Mouse).